We begin with the raw amino-acid sequence, 429 residues long: Polypyrimidine tract-binding protein homolog 2 (429 aa).

Position 2 is an N-acetylserine (S2). RRM domains lie at 18–96, 110–197, and 243–323; these read KVLH…YSNR, GNVL…YSAH, and SNVL…YSRH. Residues 331–429 form a disordered region; sequence NNDRSRDYTM…QHYGGPGPMH (99 aa). Residues 367–381 show a composition bias toward low complexity; it reads GGSHHQQQQQPQGGW. The segment covering 382–397 has biased composition (gly residues); it reads VQPGGQGSMGMGGGGH.

The protein localises to the nucleus. In terms of biological role, plays a role in pre-mRNA splicing. Binds to the polypyrimidine tract of introns. May promote the binding of U2 snRNP to pre-mRNA. This chain is Polypyrimidine tract-binding protein homolog 2, found in Arabidopsis thaliana (Mouse-ear cress).